The chain runs to 528 residues: Glutamyl-tRNA(Gln) amidotransferase subunit B, mitochondrial (528 aa).

A mitochondrion-targeting transit peptide spans 1 to 21 (MSWRLSFRTNLLIYNVRRRNY).

It belongs to the GatB/GatE family. GatB subfamily. As to quaternary structure, subunit of the heterotrimeric GatCAB amidotransferase (AdT) complex, composed of A, B and C subunits.

The protein localises to the mitochondrion. The catalysed reaction is L-glutamyl-tRNA(Gln) + L-glutamine + ATP + H2O = L-glutaminyl-tRNA(Gln) + L-glutamate + ADP + phosphate + H(+). Functionally, allows the formation of correctly charged Gln-tRNA(Gln) through the transamidation of misacylated Glu-tRNA(Gln) in the mitochondria. The reaction takes place in the presence of glutamine and ATP through an activated gamma-phospho-Glu-tRNA(Gln). The chain is Glutamyl-tRNA(Gln) amidotransferase subunit B, mitochondrial from Aedes aegypti (Yellowfever mosquito).